A 275-amino-acid polypeptide reads, in one-letter code: 2,3,4,5-tetrahydropyridine-2,6-dicarboxylate N-succinyltransferase (275 aa).

Substrate contacts are provided by Arg-104 and Asp-141.

It belongs to the transferase hexapeptide repeat family. As to quaternary structure, homotrimer.

The protein localises to the cytoplasm. It carries out the reaction (S)-2,3,4,5-tetrahydrodipicolinate + succinyl-CoA + H2O = (S)-2-succinylamino-6-oxoheptanedioate + CoA. The protein operates within amino-acid biosynthesis; L-lysine biosynthesis via DAP pathway; LL-2,6-diaminopimelate from (S)-tetrahydrodipicolinate (succinylase route): step 1/3. This chain is 2,3,4,5-tetrahydropyridine-2,6-dicarboxylate N-succinyltransferase, found in Actinobacillus succinogenes (strain ATCC 55618 / DSM 22257 / CCUG 43843 / 130Z).